The chain runs to 592 residues: E3 ubiquitin-protein ligase RNF180 (592 aa).

Over 1-564 (MKRSEESTST…DSRGWWFDMD (564 aa)) the chain is Cytoplasmic. Phosphoserine is present on Ser231. Residues 282 to 489 (QSPPSFDPNM…VFLQTELNNA (208 aa)) form an interaction with ZIC2 region. The RING-type zinc finger occupies 432–474 (CAVCLDVYFNPYMCYPCHHIFCEPCLRTLAKDNPASTPCPLCR). The helical transmembrane segment at 565 to 585 (MVIIYIYSVNWVIGFVVFCFL) threads the bilayer. The Extracellular segment spans residues 586 to 592 (CYFFFPF).

Interacts with ZIC2. Brain, kidney, testis and uterus. membrane protein. Nucleus envelope.

The protein localises to the endoplasmic reticulum membrane. The protein resides in the nucleus envelope. It catalyses the reaction S-ubiquitinyl-[E2 ubiquitin-conjugating enzyme]-L-cysteine + [acceptor protein]-L-lysine = [E2 ubiquitin-conjugating enzyme]-L-cysteine + N(6)-ubiquitinyl-[acceptor protein]-L-lysine.. The protein operates within protein modification; protein ubiquitination. In terms of biological role, E3 ubiquitin-protein ligase which promotes polyubiquitination and degradation by the proteasome pathway of ZIC2. The sequence is that of E3 ubiquitin-protein ligase RNF180 (Rnf180) from Mus musculus (Mouse).